The following is a 483-amino-acid chain: Regulatory protein ViaA (483 aa).

Belongs to the ViaA family. As to quaternary structure, homodimer. Interacts with RavA.

Its subcellular location is the cytoplasm. In terms of biological role, component of the RavA-ViaA chaperone complex, which may act on the membrane to optimize the function of some of the respiratory chains. ViaA stimulates the ATPase activity of RavA. This chain is Regulatory protein ViaA, found in Escherichia coli O139:H28 (strain E24377A / ETEC).